Reading from the N-terminus, the 149-residue chain is UPF0260 protein RCAP_rcc02083 (149 aa).

The protein belongs to the UPF0260 family.

This Rhodobacter capsulatus (strain ATCC BAA-309 / NBRC 16581 / SB1003) protein is UPF0260 protein RCAP_rcc02083.